The following is a 440-amino-acid chain: Calcium/calmodulin-regulated receptor-like kinase 1 (440 aa).

Residues 8 to 28 (LIVGISLGLVIGVVLAISALF) traverse the membrane as a helical segment. Residues 28–228 (FCFRYHRKKS…ARGLEYLHDG (201 aa)) form a calmodulin binding region. In terms of domain architecture, Protein kinase spans 113 to 380 (CNFTTLIGQG…DIVQVLTRVI (268 aa)). Residues 119 to 127 (IGQGAFGPV) and Lys-141 each bind ATP. Tyr-186 is modified (phosphotyrosine). Asp-237 functions as the Proton acceptor in the catalytic mechanism. Ser-241 is modified (phosphoserine). Residue Thr-274 is modified to Phosphothreonine. Phosphotyrosine is present on Tyr-282. Residues 369-440 (MRDIVQVLTR…DSSIAEDVIL (72 aa)) form a calmodulin binding region. The interval 386 to 427 (RKRQKNSPSPSPRLPPPPPIVEESEGELTANGSLRSEIHRRD) is disordered. Positions 394 to 405 (SPSPRLPPPPPI) are enriched in pro residues.

This sequence belongs to the protein kinase superfamily. Ser/Thr protein kinase family. As to quaternary structure, interacts with calmodulin (CaM) in a calcium- (Ca(2+)-) dependent manner. Binds to MEKK1. Similar transcript expression levels in seedlings, roots, leaves, stems and flowers, and lower levels in siliques, but protein accumulates mostly in 7-day-old seedlings, old roots and young leaves and, to a lower extent, in young roots, old leaves, flowers and siliques (at protein level).

The protein resides in the cell membrane. It localises to the endosome membrane. It carries out the reaction L-seryl-[protein] + ATP = O-phospho-L-seryl-[protein] + ADP + H(+). It catalyses the reaction L-threonyl-[protein] + ATP = O-phospho-L-threonyl-[protein] + ADP + H(+). Kinase activity is stimulated by calcium/calmodulin, but blocked by chlorpromazine. In terms of biological role, required for cold tolerance, via the activation of MAP kinases activity. Phosphorylates and activates MEKK1 in response to cold in a calcium-dependent manner. This Arabidopsis thaliana (Mouse-ear cress) protein is Calcium/calmodulin-regulated receptor-like kinase 1.